The chain runs to 315 residues: MIKLGIVMDPIASINIKKDSSFAMLLEAQRRGYELHYMEMADLYLINGEARARTRTLSVEQNYDKWYDFTGEQDLALDSLDAILMRKDPPFDTEFIYATYILERAEEKGTLIVNKPQSLRDCNEKLFTAWFSDLTPETLVTRNKAQLKAFWQKHSDIILKPLDGMGGASIFRVKEGDPNLGVIAETLTEHGTRYCMAQNYLPAIVDGDKRVLVVDGEPVPYCLARIPQGGETRGNLAAGGRGEPRPLTDSDWAIARRIGPTLKAKGLIFVGLDIIGDRLTEINVTSPTCIREIEAEFPISITGMLMDAIEARLQK.

The region spanning 125-310 is the ATP-grasp domain; that stretch reads KLFTAWFSDL…ITGMLMDAIE (186 aa). A glycan (N-beta-linked (GlcNAc) arginine) is linked at Arg-256. 2 residues coordinate Mg(2+): Glu-281 and Asn-283.

The protein belongs to the prokaryotic GSH synthase family. It depends on Mg(2+) as a cofactor. Requires Mn(2+) as cofactor. Glycosylation at Arg-256 by NleB enhances the glutathione synthetase activity, leading to an increase in glutathione production. Glycosylation may promote C.rodentium survival in oxidative stress conditions.

The enzyme catalyses gamma-L-glutamyl-L-cysteine + glycine + ATP = glutathione + ADP + phosphate + H(+). It participates in sulfur metabolism; glutathione biosynthesis; glutathione from L-cysteine and L-glutamate: step 2/2. The sequence is that of Glutathione synthetase from Citrobacter rodentium.